The chain runs to 480 residues: Protein nucleotidyltransferase YdiU (480 aa).

ATP-binding residues include glycine 86, glycine 88, arginine 89, lysine 109, aspartate 121, glycine 122, arginine 172, and arginine 179. The active-site Proton acceptor is aspartate 248. The Mg(2+) site is built by asparagine 249 and aspartate 258. Residue aspartate 258 coordinates ATP.

Belongs to the SELO family. Mg(2+) is required as a cofactor. It depends on Mn(2+) as a cofactor.

It carries out the reaction L-seryl-[protein] + ATP = 3-O-(5'-adenylyl)-L-seryl-[protein] + diphosphate. It catalyses the reaction L-threonyl-[protein] + ATP = 3-O-(5'-adenylyl)-L-threonyl-[protein] + diphosphate. The enzyme catalyses L-tyrosyl-[protein] + ATP = O-(5'-adenylyl)-L-tyrosyl-[protein] + diphosphate. The catalysed reaction is L-histidyl-[protein] + UTP = N(tele)-(5'-uridylyl)-L-histidyl-[protein] + diphosphate. It carries out the reaction L-seryl-[protein] + UTP = O-(5'-uridylyl)-L-seryl-[protein] + diphosphate. It catalyses the reaction L-tyrosyl-[protein] + UTP = O-(5'-uridylyl)-L-tyrosyl-[protein] + diphosphate. In terms of biological role, nucleotidyltransferase involved in the post-translational modification of proteins. It can catalyze the addition of adenosine monophosphate (AMP) or uridine monophosphate (UMP) to a protein, resulting in modifications known as AMPylation and UMPylation. This chain is Protein nucleotidyltransferase YdiU, found in Salmonella agona (strain SL483).